Here is a 273-residue protein sequence, read N- to C-terminus: Putative phosphoenolpyruvate synthase regulatory protein (273 aa).

Residue A153–T160 participates in ADP binding.

This sequence belongs to the pyruvate, phosphate/water dikinase regulatory protein family. PSRP subfamily.

The enzyme catalyses [pyruvate, water dikinase] + ADP = [pyruvate, water dikinase]-phosphate + AMP + H(+). It catalyses the reaction [pyruvate, water dikinase]-phosphate + phosphate + H(+) = [pyruvate, water dikinase] + diphosphate. Functionally, bifunctional serine/threonine kinase and phosphorylase involved in the regulation of the phosphoenolpyruvate synthase (PEPS) by catalyzing its phosphorylation/dephosphorylation. The chain is Putative phosphoenolpyruvate synthase regulatory protein from Xylella fastidiosa (strain 9a5c).